A 189-amino-acid chain; its full sequence is Putative 3-methyladenine DNA glycosylase (189 aa).

It belongs to the DNA glycosylase MPG family.

This is Putative 3-methyladenine DNA glycosylase (mag) from Corynebacterium glutamicum (strain ATCC 13032 / DSM 20300 / JCM 1318 / BCRC 11384 / CCUG 27702 / LMG 3730 / NBRC 12168 / NCIMB 10025 / NRRL B-2784 / 534).